The chain runs to 116 residues: Large ribosomal subunit protein uL18 (116 aa).

The protein belongs to the universal ribosomal protein uL18 family. As to quaternary structure, part of the 50S ribosomal subunit; part of the 5S rRNA/L5/L18/L25 subcomplex. Contacts the 5S and 23S rRNAs.

In terms of biological role, this is one of the proteins that bind and probably mediate the attachment of the 5S RNA into the large ribosomal subunit, where it forms part of the central protuberance. This is Large ribosomal subunit protein uL18 from Mycoplasma pneumoniae (strain ATCC 29342 / M129 / Subtype 1) (Mycoplasmoides pneumoniae).